Reading from the N-terminus, the 387-residue chain is Oxidase FUB9 (387 aa).

Positions 1–20 (MSRTNLPIQPAKMSDATSSK) are disordered. Residues 18–379 (SSKPQIFSIQ…TPAHLSLLNA (362 aa)) enclose the FMN hydroxy acid dehydrogenase domain. Tyr-44 contributes to the a 2-oxocarboxylate binding site. Residues Ser-126, Gln-150, and Thr-178 each contribute to the FMN site. Residue Arg-187 coordinates a 2-oxocarboxylate. Lys-250 contacts FMN. His-274 (proton acceptor) is an active-site residue. Residue Arg-277 coordinates a 2-oxocarboxylate. FMN-binding positions include 305–309 (DGGFR) and 328–329 (GR).

The protein belongs to the FMN-dependent alpha-hydroxy acid dehydrogenase family. Requires FMN as cofactor.

It participates in mycotoxin biosynthesis. Its function is as follows. Oxidase; part of the gene cluster that mediates the biosynthesis of fusaric acid, a mycotoxin with low to moderate toxicity to animals and humans, but with high phytotoxic properties. L-aspartate is suggested as fusaric acid amino acid precursor that is activated and further processed to O-acetyl-L-homoserine by cluster enzymes aspartate kinase FUB3 and homoserine O-acetyltransferase FUB5, as well as enzymes of the primary metabolism. The polyketide synthase (PKS) FUB1 generates the triketide trans-2-hexenal which is presumptively released by the hydrolase FUB4 and linked to the NRPS-bound amino acid precursor by NAD(P)-dependent dehydrogenase FUB6. FUB1, FUB4, and the non-canonical NRPS Fub8 may form an enzyme complex. Further processing of the NRPS-bound intermediate might be carried out by FUB6 and the sulfhydrylase FUB7, enabling a spontaneous electrocyclization to close the carbon backbone of fusaric acid. Dihydrofusaric acid is likely to be released via reduction by the thioester reductase (TR) domain of FUB8 whereupon the final oxidation to fusaric acid may (also) be performed by the FMN-dependent dehydrogenase FUB9. In Gibberella moniliformis (strain M3125 / FGSC 7600) (Maize ear and stalk rot fungus), this protein is Oxidase FUB9.